Here is a 187-residue protein sequence, read N- to C-terminus: Shikimate kinase (187 aa).

ATP is bound at residue 14-19 (TSGKST). Residue serine 18 participates in Mg(2+) binding. Substrate-binding residues include aspartate 36, arginine 60, and glycine 82. ATP is bound at residue arginine 120. Arginine 147 is a binding site for substrate.

The protein belongs to the shikimate kinase family. In terms of assembly, monomer. Requires Mg(2+) as cofactor.

The protein localises to the cytoplasm. The catalysed reaction is shikimate + ATP = 3-phosphoshikimate + ADP + H(+). It participates in metabolic intermediate biosynthesis; chorismate biosynthesis; chorismate from D-erythrose 4-phosphate and phosphoenolpyruvate: step 5/7. Functionally, catalyzes the specific phosphorylation of the 3-hydroxyl group of shikimic acid using ATP as a cosubstrate. The polypeptide is Shikimate kinase (Chloroherpeton thalassium (strain ATCC 35110 / GB-78)).